The sequence spans 170 residues: Acireductone dioxygenase (170 aa).

4 residues coordinate Fe(2+): His-99, His-101, Glu-105, and His-144. Ni(2+) contacts are provided by His-99, His-101, Glu-105, and His-144.

Belongs to the acireductone dioxygenase (ARD) family. Monomer. Fe(2+) is required as a cofactor. Ni(2+) serves as cofactor.

The enzyme catalyses 1,2-dihydroxy-5-(methylsulfanyl)pent-1-en-3-one + O2 = 3-(methylsulfanyl)propanoate + CO + formate + 2 H(+). The catalysed reaction is 1,2-dihydroxy-5-(methylsulfanyl)pent-1-en-3-one + O2 = 4-methylsulfanyl-2-oxobutanoate + formate + 2 H(+). Its pathway is amino-acid biosynthesis; L-methionine biosynthesis via salvage pathway; L-methionine from S-methyl-5-thio-alpha-D-ribose 1-phosphate: step 5/6. Its function is as follows. Catalyzes 2 different reactions between oxygen and the acireductone 1,2-dihydroxy-3-keto-5-methylthiopentene (DHK-MTPene) depending upon the metal bound in the active site. Fe-containing acireductone dioxygenase (Fe-ARD) produces formate and 2-keto-4-methylthiobutyrate (KMTB), the alpha-ketoacid precursor of methionine in the methionine recycle pathway. Ni-containing acireductone dioxygenase (Ni-ARD) produces methylthiopropionate, carbon monoxide and formate, and does not lie on the methionine recycle pathway. In Bacillus thuringiensis (strain Al Hakam), this protein is Acireductone dioxygenase.